The following is a 172-amino-acid chain: MSIRFARKADCAAIAEIYNHAVLYTAAIWNDQTVDADNRIAWFEARTLAGYPVLVSEENGVVTGYASFGDWRSFDGFRHTVEHSVYVHPDHQGKGLGRKLLSRLIDEARDCGKHVMVAGIESQNQASLHLHQSLGFVVTAQMPQVGTKFGRWLDLTFMQLQLDERTEPDAIG.

An N-acetyltransferase domain is found at 1 to 163; the sequence is MSIRFARKAD…DLTFMQLQLD (163 aa). Residues 85–87, 93–98, N124, and S133 contribute to the acetyl-CoA site; these read VYV and GKGLGR.

This sequence belongs to the acetyltransferase family. PAT/BAR subfamily.

It catalyses the reaction L-methionine + acetyl-CoA = N-acetyl-L-methionine + CoA + H(+). The enzyme catalyses propanoyl-CoA + L-methionine = N-propanoyl-L-methioninate + CoA + H(+). The catalysed reaction is L-alpha-phenylglycine + acetyl-CoA = N-acetyl-L-alpha-phenylglycine + CoA + H(+). It carries out the reaction L-methionine sulfoximine + acetyl-CoA = N-acetyl-L-methionine sulfoximine + CoA + H(+). It catalyses the reaction L-methionine sulfone + acetyl-CoA = N-acetyl-L-methionine sulfone + CoA + H(+). In terms of biological role, acyltransferase that appears to be required for E.coli optimal growth rate and yield via the formation of N-acetylated amino acids. Catalyzes the acylation of L-methionine using acetyl-CoA or propanoyl-CoA as acyl donors, and the acetylation of L-phenylglycine. Is also able to N-acylate other free L-amino acids and their derivatives using a CoA thioester as cosubstrate. Using acetyl-CoA as an acyl donor, substrate specificity is methionine sulfone &gt; methionine sulfoximine &gt; methionine sulfoxide &gt; methionine. Asparagine, lysine, glutamine, aspartate and glutamate are very poor substrates. Using methionine as a substrate, acyl donor preference is propanoyl-CoA &gt; acetyl-CoA &gt;&gt; butyryl-CoA. Likely plays a role in the resistance against the toxic effects of L-methionine sulfoximine (MSX), via its ability to catalyze its acetylation; MSX is a rare amino acid which inhibits glutamine synthetase (GlnA). The sequence is that of L-amino acid N-acyltransferase MnaT from Escherichia coli (strain K12).